The following is a 337-amino-acid chain: Biotin synthase (337 aa).

Residues 55–284 form the Radical SAM core domain; sequence YFKNTIELCS…KKTILLAGGK (230 aa). The [4Fe-4S] cluster site is built by C73, C77, and C80. [2Fe-2S] cluster contacts are provided by C117, C149, and C209.

It belongs to the radical SAM superfamily. Biotin synthase family. Homodimer. [4Fe-4S] cluster serves as cofactor. Requires [2Fe-2S] cluster as cofactor.

The enzyme catalyses (4R,5S)-dethiobiotin + (sulfur carrier)-SH + 2 reduced [2Fe-2S]-[ferredoxin] + 2 S-adenosyl-L-methionine = (sulfur carrier)-H + biotin + 2 5'-deoxyadenosine + 2 L-methionine + 2 oxidized [2Fe-2S]-[ferredoxin]. It functions in the pathway cofactor biosynthesis; biotin biosynthesis; biotin from 7,8-diaminononanoate: step 2/2. Functionally, catalyzes the conversion of dethiobiotin (DTB) to biotin by the insertion of a sulfur atom into dethiobiotin via a radical-based mechanism. In Caldicellulosiruptor bescii (strain ATCC BAA-1888 / DSM 6725 / KCTC 15123 / Z-1320) (Anaerocellum thermophilum), this protein is Biotin synthase.